A 663-amino-acid chain; its full sequence is Epithelial sodium channel subunit gamma-2 (663 aa).

Topologically, residues 1-55 are cytoplasmic; it reads MSNSGKKLTQKLKKNLPVTGPQAPTLYELMQWYCLNTNTHGCRRIVVSKGRLRRW. Residues 56-76 traverse the membrane as a helical segment; it reads IWIVLTLIAVALIFWQCALLL. Topologically, residues 77–544 are extracellular; that stretch reads MTYYSVSASI…GGQLGLWMSC (468 aa). 8 cysteine pairs are disulfide-bonded: cysteine 101/cysteine 286, cysteine 209/cysteine 217, cysteine 263/cysteine 270, cysteine 375/cysteine 460, cysteine 397/cysteine 456, cysteine 401/cysteine 452, cysteine 410/cysteine 437, and cysteine 412/cysteine 426. A helical transmembrane segment spans residues 545–565; that stretch reads SMVCGLEIVEVFFIDSFWVIL. Topologically, residues 566 to 663 are cytoplasmic; sequence RQKWHKLCNW…IDSDEDVERF (98 aa).

It belongs to the amiloride-sensitive sodium channel (TC 1.A.6) family. SCNN1G subfamily. In terms of assembly, component of the heterotrimeric epithelial sodium channel (ENaC) composed of an alpha/SCNN1A, a beta/SCNN1B and a gamma/SCNN1G subunit.

The protein resides in the apical cell membrane. The enzyme catalyses Na(+)(in) = Na(+)(out). Originally identified and characterized by its inhibition by the diuretic drug amiloride. Functionally, this is one of the three pore-forming subunits of the heterotrimeric epithelial sodium channel (ENaC), a critical regulator of sodium balance and fluid homeostasis. ENaC operates in epithelial tissues, where it mediates the electrodiffusion of sodium ions from extracellular fluid through the apical membrane of cells, with water following osmotically. The sequence is that of Epithelial sodium channel subunit gamma-2 (scnn1g-b) from Xenopus laevis (African clawed frog).